The sequence spans 962 residues: Leucine--tRNA ligase (962 aa).

The short motif at 40–51 (PYPSGAGLHVGH) is the 'HIGH' region element. The short motif at 737 to 741 (KMSKS) is the 'KMSKS' region element. Residue lysine 740 coordinates ATP.

Belongs to the class-I aminoacyl-tRNA synthetase family.

The protein resides in the cytoplasm. It carries out the reaction tRNA(Leu) + L-leucine + ATP = L-leucyl-tRNA(Leu) + AMP + diphosphate. In Flavobacterium psychrophilum (strain ATCC 49511 / DSM 21280 / CIP 103535 / JIP02/86), this protein is Leucine--tRNA ligase.